A 797-amino-acid chain; its full sequence is Hid-1 family protein P27G11.12 (797 aa).

It belongs to the hid-1 family.

The protein resides in the cytoplasm. It localises to the nucleus. The protein is Hid-1 family protein P27G11.12 of Schizosaccharomyces pombe (strain 972 / ATCC 24843) (Fission yeast).